Here is an 85-residue protein sequence, read N- to C-terminus: Large ribosomal subunit protein bL31B (85 aa).

Belongs to the bacterial ribosomal protein bL31 family. Type B subfamily. As to quaternary structure, part of the 50S ribosomal subunit.

The sequence is that of Large ribosomal subunit protein bL31B from Stutzerimonas stutzeri (strain A1501) (Pseudomonas stutzeri).